Here is a 668-residue protein sequence, read N- to C-terminus: Packaging protein UL32 homolog (668 aa).

Residues 1–10 are compositionally biased toward polar residues; the sequence is MNPSTHVSSN. The disordered stretch occupies residues 1–35; it reads MNPSTHVSSNGPTTPPHGPHTTFLPPTSPAPSTSS. Residues 19 to 35 are compositionally biased toward low complexity; it reads PHTTFLPPTSPAPSTSS. 4 residues coordinate Zn(2+): Cys-200, Cys-203, His-276, and Cys-282. A zinc finger 1 region spans residues 200–282; sequence CNLCAIISIC…FHLHFFINRC (83 aa). The segment at 401–430 is disordered; the sequence is IEEEEDEEGGEKGGDDPGRHNGGGTSGGFS. The span at 410 to 419 shows a compositional bias: basic and acidic residues; the sequence is GEKGGDDPGR. Positions 459, 462, 567, and 574 each coordinate Zn(2+). Residues 459–574 form a zinc finger 2 region; sequence CLLCELMACS…YKHFFCDPQC (116 aa).

This sequence belongs to the herpesviridae UL32 protein family.

It is found in the host cytoplasm. The protein localises to the host nucleus. Plays a role in efficient localization of neo-synthesized capsids to nuclear replication compartments, thereby controlling cleavage and packaging of virus genomic DNA. The protein is Packaging protein UL32 homolog (UL52) of Homo sapiens (Human).